Reading from the N-terminus, the 109-residue chain is Guanylin (109 aa).

The signal sequence occupies residues 1–21 (MNTFLFPTLCLLGVWAALAGG). A propeptide spanning residues 22 to 94 (VTVKDGEFSF…LERLETIAQD (73 aa)) is cleaved from the precursor. Disulfide bonds link Cys-63–Cys-76, Cys-98–Cys-106, and Cys-101–Cys-109.

Belongs to the guanylin family.

It is found in the secreted. Endogenous activator of intestinal guanylate cyclase. It stimulates this enzyme through the same receptor binding region as the heat-stable enterotoxins. The polypeptide is Guanylin (GUCA2A) (Sus scrofa (Pig)).